The chain runs to 981 residues: GPI ethanolamine phosphate transferase 1 (981 aa).

The Cytoplasmic segment spans residues 1 to 6 (MAGSSR). Residues 7 to 27 (IGFMAIAVAFHLVYILSIFDI) form a helical membrane-spanning segment. The Lumenal portion of the chain corresponds to 28–464 (YFVSPIVTGM…LQTYDWLFLR (437 aa)). Residues asparagine 148, asparagine 211, and asparagine 295 are each glycosylated (N-linked (GlcNAc...) asparagine). Residues 465–485 (ALITIGYLGWMAYATTTVLSL) traverse the membrane as a helical segment. The Cytoplasmic portion of the chain corresponds to 486–496 (YVVKESMSPQR). The helical transmembrane segment at 497-517 (TLLGSAFFLSLLVALYSSFII) threads the bilayer. Over 518 to 519 (SK) the chain is Lumenal. Residues 520 to 540 (SPPAYYLYAFFPVLFWEEVYA) traverse the membrane as a helical segment. The Cytoplasmic segment spans residues 541-560 (RRANVAKGFQALFGHVKSGG). Residues 561–581 (AVVALVFNVVLYLGVIQSLAL) traverse the membrane as a helical segment. Residues 582–587 (AYIHRE) are Lumenal-facing. Residues 588 to 608 (ILTGLFVLGAFWPMTQGISFL) form a helical membrane-spanning segment. Over 609 to 611 (RSH) the chain is Cytoplasmic. The helical transmembrane segment at 612–632 (LFLSMLWFFSCLAMSTFTLLP) threads the bilayer. Over 633–638 (AMKVED) the chain is Lumenal. The chain crosses the membrane as a helical span at residues 639 to 659 (IPLIMAGGGLMTFVGLAYLVL). The Cytoplasmic portion of the chain corresponds to 660–681 (EDFILSDVSSSKTKLKRLHTSR). The helical transmembrane segment at 682 to 702 (TLLGIQVGLIILAMLVTHSSA) threads the bilayer. The Lumenal segment spans residues 703 to 708 (TSLQAK). Residues 709–729 (LGLPKGNQIVGWFVLVTSLLM) traverse the membrane as a helical segment. Residues 730-744 (PLAYRLQPNSHYMHR) are Cytoplasmic-facing. The helical transmembrane segment at 745–767 (LAIIFLTCAPTFVILTISYEGLF) threads the bilayer. Residues 768–819 (YVAFSITLLSWVRLEYAVDAFTQEKAKKQATVAGSQQHTPSTFRPLSLSDAR) are Lumenal-facing. The helical transmembrane segment at 820 to 840 (IALFFMVLLQSAFFSTGNIAS) threads the bilayer. Residues 841–862 (ISSFSLESVSRLIPVFDPFSQG) lie on the Cytoplasmic side of the membrane. Residues 863–883 (ALLILKIIIPFFLISANLGVL) traverse the membrane as a helical segment. The Lumenal segment spans residues 884–892 (NKRLGVAPS). Residues 893–913 (AIFMVVLTASDVLTLYFFWVV) traverse the membrane as a helical segment. Topologically, residues 914–929 (KDEGSWLEIGSTITHF) are cytoplasmic. A helical membrane pass occupies residues 930-950 (AIASFLCVFVAALEFVSAAFI). Residues 951 to 981 (AGIEVEDTKSAALTSASTKADEKVPPVAGAE) lie on the Lumenal side of the membrane.

Belongs to the PIGG/PIGN/PIGO family. PIGN subfamily.

The protein localises to the endoplasmic reticulum membrane. The protein operates within glycolipid biosynthesis; glycosylphosphatidylinositol-anchor biosynthesis. Functionally, ethanolamine phosphate transferase involved in glycosylphosphatidylinositol-anchor biosynthesis. Transfers ethanolamine phosphate to the first alpha-1,4-linked mannose of the glycosylphosphatidylinositol precursor of GPI-anchor. This is GPI ethanolamine phosphate transferase 1 (MCD4) from Gibberella zeae (strain ATCC MYA-4620 / CBS 123657 / FGSC 9075 / NRRL 31084 / PH-1) (Wheat head blight fungus).